The primary structure comprises 123 residues: uncharacterized protein (123 aa).

Disordered stretches follow at residues 1–21 and 82–123; these read MGAP…KLFK and EKTA…EDES.

This is an uncharacterized protein from Homo sapiens (Human).